Reading from the N-terminus, the 686-residue chain is Bromodomain-containing factor 1 (686 aa).

2 disordered regions span residues 1–69 (MTDI…PAGL) and 85–150 (NGYN…NPIP). The segment covering 9 to 25 (NDVDVNGNNVNDDVSSN) has biased composition (low complexity). The span at 99-120 (QGLKKEEGGQGTKQEDLDENSK) shows a compositional bias: basic and acidic residues. Residues 130 to 139 (EPAPAPPPEP) are compositionally biased toward pro residues. In terms of domain architecture, Bromo 1 spans 145 to 254 (PQNPIPKHQQ…ASFEKHMLNM (110 aa)). S270 is subject to Phosphoserine. The segment at 283 to 304 (QTHNGRPKRTIHPPKSKDIYPY) is disordered. Residues 287-296 (GRPKRTIHPP) are compositionally biased toward basic residues. Residues 312-421 (KRLQQAMKFC…EVFNSKWADR (110 aa)) enclose the Bromo 2 domain. Disordered regions lie at residues 424-447 (LDDYDSDEDSRTQGDYDDYESEYS), 486-523 (IRKERRLARGSKKRGKRSKGRSGSKNASSKGRRDKKNK), 594-636 (SSGA…EQSR), and 649-686 (DSASPLSQNGSPGQIQSAAHNGFSSSSDDDVSSESEEE). S429 is subject to Phosphoserine. Acidic residues predominate over residues 438–447 (DYDDYESEYS). Residues 460-499 (AIQYLEEQLARMKVELQQLKKQELEKIRKERRLARGSKKR) adopt a coiled-coil conformation. The segment covering 488-507 (KERRLARGSKKRGKRSKGRS) has biased composition (basic residues). The 81-residue stretch at 518-598 (RDKKNKLKTV…RQYESSSGAS (81 aa)) folds into the NET domain. Polar residues-rich tracts occupy residues 594–620 (SSGASNGLDGTSGVTRDASSLSPTSAG) and 652–671 (SPLSQNGSPGQIQSAAHNGF). Phosphoserine occurs at positions 615 and 659. Positions 675–686 (SDDDVSSESEEE) are enriched in acidic residues.

The protein belongs to the BET family. In terms of assembly, interacts with the TFIID subunit TAF7 and with acetylated histones H3 and H4. Phosphorylated by the casein kinase CK2 complex.

Its subcellular location is the nucleus. Transcription factor involved in the expression of a broad class of genes including snRNAs. Required for sporulation and DNA-damage repair. Prevents the spreading of SIR silencing at telomeres and protects histone H4, but not H3, from deacetylation. This is Bromodomain-containing factor 1 (BDF1) from Saccharomyces cerevisiae (strain ATCC 204508 / S288c) (Baker's yeast).